The primary structure comprises 308 residues: Ribosomal RNA small subunit methyltransferase H (308 aa).

Residues 36-38 (GGH), Asp-55, Phe-86, Asp-103, and Gln-110 each bind S-adenosyl-L-methionine.

This sequence belongs to the methyltransferase superfamily. RsmH family.

The protein resides in the cytoplasm. It catalyses the reaction cytidine(1402) in 16S rRNA + S-adenosyl-L-methionine = N(4)-methylcytidine(1402) in 16S rRNA + S-adenosyl-L-homocysteine + H(+). Specifically methylates the N4 position of cytidine in position 1402 (C1402) of 16S rRNA. This chain is Ribosomal RNA small subunit methyltransferase H, found in Helicobacter pylori (strain HPAG1).